A 102-amino-acid polypeptide reads, in one-letter code: NADH-quinone oxidoreductase subunit K (102 aa).

Helical transmembrane passes span 2 to 22 (LDFYILVALILFFIGVLGVIL), 26 to 46 (IFTIFMSVELMLNATALIFAT), and 58 to 78 (VIVMLIIAIAAAEASFGLALI).

This sequence belongs to the complex I subunit 4L family. As to quaternary structure, NDH-1 is composed of 14 different subunits. Subunits NuoA, H, J, K, L, M, N constitute the membrane sector of the complex.

It is found in the cell inner membrane. It catalyses the reaction a quinone + NADH + 5 H(+)(in) = a quinol + NAD(+) + 4 H(+)(out). Its function is as follows. NDH-1 shuttles electrons from NADH, via FMN and iron-sulfur (Fe-S) centers, to quinones in the respiratory chain. The immediate electron acceptor for the enzyme in this species is believed to be ubiquinone. Couples the redox reaction to proton translocation (for every two electrons transferred, four hydrogen ions are translocated across the cytoplasmic membrane), and thus conserves the redox energy in a proton gradient. The sequence is that of NADH-quinone oxidoreductase subunit K from Campylobacter fetus subsp. fetus (strain 82-40).